The following is a 501-amino-acid chain: Aldehyde dehydrogenase 1A1 (501 aa).

Ser-2 bears the N-acetylserine mark. Lys-91 and Lys-128 each carry N6-acetyllysine. NAD(+)-binding positions include 167–170 (IPWN), 193–196 (KPAE), 226–227 (GP), and 246–247 (GS). At Lys-252 the chain carries N6-acetyllysine. Glu-269 functions as the Proton acceptor in the catalytic mechanism. Residue 269–271 (ELG) coordinates NAD(+). Catalysis depends on Cys-303, which acts as the Nucleophile. The mediates interaction with PRMT3 stretch occupies residues 336–501 (LNSGINQGPQ…VAIKISQKNS (166 aa)). An NAD(+)-binding site is contributed by 349-353 (EQHDK). N6-acetyllysine occurs at positions 353 and 367. 400–402 (EIF) contacts NAD(+). Residue Lys-410 is modified to N6-acetyllysine. At Ser-413 the chain carries Phosphoserine. Lys-419, Lys-435, and Lys-495 each carry N6-acetyllysine.

It belongs to the aldehyde dehydrogenase family. Homotetramer. Interacts with PRMT3; the interaction is direct, inhibits ALDH1A1 aldehyde dehydrogenase activity and is independent of the methyltransferase activity of PRMT3. The N-terminus is blocked most probably by acetylation.

The protein localises to the cytoplasm. The protein resides in the cytosol. Its subcellular location is the cell projection. It is found in the axon. It carries out the reaction an aldehyde + NAD(+) + H2O = a carboxylate + NADH + 2 H(+). The enzyme catalyses all-trans-retinal + NAD(+) + H2O = all-trans-retinoate + NADH + 2 H(+). It catalyses the reaction 9-cis-retinal + NAD(+) + H2O = 9-cis-retinoate + NADH + 2 H(+). The catalysed reaction is 11-cis-retinal + NAD(+) + H2O = 11-cis-retinoate + NADH + 2 H(+). It carries out the reaction 13-cis-retinal + NAD(+) + H2O = 13-cis-retinoate + NADH + 2 H(+). The enzyme catalyses 3-deoxyglucosone + NAD(+) + H2O = 2-dehydro-3-deoxy-D-gluconate + NADH + 2 H(+). It catalyses the reaction (E)-4-hydroxynon-2-enal + NAD(+) + H2O = (E)-4-hydroxynon-2-enoate + NADH + 2 H(+). The catalysed reaction is malonaldehyde + NAD(+) + H2O = 3-oxopropanoate + NADH + 2 H(+). It carries out the reaction hexanal + NAD(+) + H2O = hexanoate + NADH + 2 H(+). The enzyme catalyses propanal + NAD(+) + H2O = propanoate + NADH + 2 H(+). It catalyses the reaction acetaldehyde + NAD(+) + H2O = acetate + NADH + 2 H(+). The catalysed reaction is benzaldehyde + NAD(+) + H2O = benzoate + NADH + 2 H(+). It carries out the reaction 4-aminobutanal + NAD(+) + H2O = 4-aminobutanoate + NADH + 2 H(+). It participates in cofactor metabolism; retinol metabolism. Its function is as follows. Cytosolic dehydrogenase that catalyzes the irreversible oxidation of a wide range of aldehydes to their corresponding carboxylic acid. Functions downstream of retinol dehydrogenases and catalyzes the oxidation of retinaldehyde into retinoic acid, the second step in the oxidation of retinol/vitamin A into retinoic acid. This pathway is crucial to control the levels of retinol and retinoic acid, two important molecules which excess can be teratogenic and cytotoxic. Also oxidizes aldehydes resulting from lipid peroxidation like (E)-4-hydroxynon-2-enal/HNE, malonaldehyde and hexanal that form protein adducts and are highly cytotoxic. By participating for instance to the clearance of (E)-4-hydroxynon-2-enal/HNE in the lens epithelium prevents the formation of HNE-protein adducts and lens opacification. Also functions downstream of fructosamine-3-kinase in the fructosamine degradation pathway by catalyzing the oxidation of 3-deoxyglucosone, the carbohydrate product of fructosamine 3-phosphate decomposition, which is itself a potent glycating agent that may react with lysine and arginine side-chains of proteins. Also has an aminobutyraldehyde dehydrogenase activity and is probably part of an alternative pathway for the biosynthesis of GABA/4-aminobutanoate in midbrain, thereby playing a role in GABAergic synaptic transmission. This chain is Aldehyde dehydrogenase 1A1, found in Mesocricetus auratus (Golden hamster).